Here is a 520-residue protein sequence, read N- to C-terminus: MSASPLLGMSRREFLTKLTGAGAAAFLMDWAAPVIEKAYGAGPCPGHLTDIEHIVLLMQENRSFDHYFGTLSSTNGFNAASPAFQQMGWNPMTQALDPAGVTIPFRLDTTRGPFLDGECVNDPEHQWVGMHLAWNGGANDNWLPAQATTRAGPYVPLTMGYYTRQDIPIHYLLADTFTICDGYHCSLLTGTLPNRLYWLSANIDPAGTDGGPQLVEPGFLPLQQFSWRIMPENLEDAGVSWKVYQNKGLGRFINTPISNNGLVQAFRQAADPRSNLARYGIAPTYPGDFAADVRANRLPKVSWLVPNILQSEHPALPVALGAVSMVTALRILLSNPAVWEKTALIVSYDENGGFFDHVTPPTAPPGTPGEFVTVPNIDAVPGSGGIRGPLGLGFRVPCIVISPYSRGPLMVSDTFDHTSQLKLIRARFGVPVPNMTAWRDGVVGDMTSAFNFATPPNSTRPNLSHPLLGALPKLPQCIPNVVLGTTDGALPSIPYRVPYPQVMPTQETTPVRGTPSGLCS.

Residues 1–38 (MSASPLLGMSRREFLTKLTGAGAAAFLMDWAAPVIEKA) constitute a signal peptide (tat-type signal).

It belongs to the bacterial phospholipase C family. Post-translationally, predicted to be exported by the Tat system. The position of the signal peptide cleavage has not been experimentally proven.

It localises to the secreted. The protein resides in the cell wall. It catalyses the reaction a 1,2-diacyl-sn-glycero-3-phosphocholine + H2O = phosphocholine + a 1,2-diacyl-sn-glycerol + H(+). Its function is as follows. Involved in virulence. Induces cytotoxic effects on mouse macrophage cell lines, via direct or indirect enzymatic hydrolysis of cell membrane phospholipids. Hydrolyzes phosphatidylcholine. This chain is Phospholipase C A, found in Mycobacterium tuberculosis (strain CDC 1551 / Oshkosh).